Here is a 390-residue protein sequence, read N- to C-terminus: Galactokinase (390 aa).

Substrate is bound at residue 33–36; that stretch reads EHTD. ATP-binding positions include Ser67 and 124 to 130; that span reads GSGLSSS. Mg(2+) contacts are provided by Ser130 and Glu162. Catalysis depends on Asp174, which acts as the Proton acceptor. Tyr224 contacts substrate.

This sequence belongs to the GHMP kinase family. GalK subfamily.

The protein localises to the cytoplasm. It catalyses the reaction alpha-D-galactose + ATP = alpha-D-galactose 1-phosphate + ADP + H(+). It functions in the pathway carbohydrate metabolism; galactose metabolism. Its function is as follows. Catalyzes the transfer of the gamma-phosphate of ATP to D-galactose to form alpha-D-galactose-1-phosphate (Gal-1-P). This is Galactokinase from Streptococcus mutans serotype c (strain ATCC 700610 / UA159).